The chain runs to 78 residues: uncharacterized protein (78 aa).

This is an uncharacterized protein from Schizosaccharomyces pombe (strain 972 / ATCC 24843) (Fission yeast).